A 274-amino-acid chain; its full sequence is Ribosomal RNA small subunit methyltransferase A (274 aa).

S-adenosyl-L-methionine-binding residues include histidine 15, leucine 17, glycine 42, glutamate 64, aspartate 89, and asparagine 109.

This sequence belongs to the class I-like SAM-binding methyltransferase superfamily. rRNA adenine N(6)-methyltransferase family. RsmA subfamily.

It localises to the cytoplasm. It catalyses the reaction adenosine(1518)/adenosine(1519) in 16S rRNA + 4 S-adenosyl-L-methionine = N(6)-dimethyladenosine(1518)/N(6)-dimethyladenosine(1519) in 16S rRNA + 4 S-adenosyl-L-homocysteine + 4 H(+). Functionally, specifically dimethylates two adjacent adenosines (A1518 and A1519) in the loop of a conserved hairpin near the 3'-end of 16S rRNA in the 30S particle. May play a critical role in biogenesis of 30S subunits. This is Ribosomal RNA small subunit methyltransferase A from Synechococcus sp. (strain CC9902).